Reading from the N-terminus, the 236-residue chain is Hydroxyacylglutathione hydrolase (236 aa).

The Zn(2+) site is built by histidine 52, histidine 54, aspartate 56, histidine 57, histidine 108, aspartate 125, and histidine 163.

Belongs to the metallo-beta-lactamase superfamily. Glyoxalase II family. As to quaternary structure, monomer. Zn(2+) is required as a cofactor.

It catalyses the reaction an S-(2-hydroxyacyl)glutathione + H2O = a 2-hydroxy carboxylate + glutathione + H(+). Its pathway is secondary metabolite metabolism; methylglyoxal degradation; (R)-lactate from methylglyoxal: step 2/2. Thiolesterase that catalyzes the hydrolysis of S-D-lactoyl-glutathione to form glutathione and D-lactic acid. In Mannheimia succiniciproducens (strain KCTC 0769BP / MBEL55E), this protein is Hydroxyacylglutathione hydrolase.